A 42-amino-acid polypeptide reads, in one-letter code: Potassium channel toxin gamma-KTx 1.5 (42 aa).

Intrachain disulfides connect Cys5/Cys23, Cys11/Cys34, Cys20/Cys39, and Cys24/Cys41.

Belongs to the ergtoxin family. Gamma-KTx 1 subfamily. Expressed by the venom gland.

The protein resides in the secreted. In terms of biological role, blocks Kv11/ERG potassium channels. The protein is Potassium channel toxin gamma-KTx 1.5 of Centruroides limpidus (Mexican scorpion).